Consider the following 284-residue polypeptide: NAD kinase (284 aa).

Asp-70 functions as the Proton acceptor in the catalytic mechanism. NAD(+) contacts are provided by residues 70–71 (DG), 139–140 (NE), Lys-167, Asp-169, Leu-177, 180–185 (TAYNLS), and Gln-236.

This sequence belongs to the NAD kinase family. A divalent metal cation serves as cofactor.

Its subcellular location is the cytoplasm. It catalyses the reaction NAD(+) + ATP = ADP + NADP(+) + H(+). Functionally, involved in the regulation of the intracellular balance of NAD and NADP, and is a key enzyme in the biosynthesis of NADP. Catalyzes specifically the phosphorylation on 2'-hydroxyl of the adenosine moiety of NAD to yield NADP. The polypeptide is NAD kinase (Helicobacter pylori (strain ATCC 700392 / 26695) (Campylobacter pylori)).